A 566-amino-acid polypeptide reads, in one-letter code: Probable F-box protein At5g39490 (566 aa).

In terms of domain architecture, F-box spans Ala8–Gln54. Positions Leu318–Asn338 are disordered. Over residues Lys320–Ser332 the composition is skewed to low complexity.

This Arabidopsis thaliana (Mouse-ear cress) protein is Probable F-box protein At5g39490.